The following is a 176-amino-acid chain: Lipocalin-1 (176 aa).

The signal sequence occupies residues 1–19 (MMRALLLAIGLGLVAALQA). C80 and C171 are disulfide-bonded.

Belongs to the calycin superfamily. Lipocalin family. Predominantly monomer. May form homodimer. Interacts with LMBR1L; this interaction mediates the endocytosis of LCN1.

It localises to the secreted. Functionally, could play a role in taste reception. Could be necessary for the concentration and delivery of sapid molecules in the gustatory system. Can bind various ligands, with chemical structures ranging from lipids and retinoids to the macrocyclic antibiotic rifampicin and even to microbial siderophores. Exhibits an extremely wide ligand pocket. The protein is Lipocalin-1 (LCN1) of Sus scrofa (Pig).